Consider the following 488-residue polypeptide: Ribulose bisphosphate carboxylase large chain (488 aa).

The substrate site is built by Asn-127 and Thr-177. The Proton acceptor role is filled by Lys-179. Lys-181 contacts substrate. The Mg(2+) site is built by Lys-205, Asp-207, and Glu-208. Lys-205 is modified (N6-carboxylysine). His-297 (proton acceptor) is an active-site residue. Residues Arg-298, His-330, and Ser-382 each contribute to the substrate site.

The protein belongs to the RuBisCO large chain family. Type I subfamily. In terms of assembly, heterohexadecamer of 8 large chains and 8 small chains. Mg(2+) serves as cofactor.

Its subcellular location is the plastid. The protein resides in the chloroplast. The enzyme catalyses 2 (2R)-3-phosphoglycerate + 2 H(+) = D-ribulose 1,5-bisphosphate + CO2 + H2O. It catalyses the reaction D-ribulose 1,5-bisphosphate + O2 = 2-phosphoglycolate + (2R)-3-phosphoglycerate + 2 H(+). Its function is as follows. RuBisCO catalyzes two reactions: the carboxylation of D-ribulose 1,5-bisphosphate, the primary event in carbon dioxide fixation, as well as the oxidative fragmentation of the pentose substrate in the photorespiration process. Both reactions occur simultaneously and in competition at the same active site. This chain is Ribulose bisphosphate carboxylase large chain, found in Cyanidioschyzon merolae (strain NIES-3377 / 10D) (Unicellular red alga).